The chain runs to 189 residues: Thermostable direct hemolysin 1 (189 aa).

Positions 1–24 (MKHQYFAKKSFLFISMLAAFKTSA) are cleaved as a signal peptide. The cysteines at positions 175 and 185 are disulfide-linked.

It belongs to the TDH hemolysin family. As to quaternary structure, homodimer.

In terms of biological role, bacterial hemolysins are exotoxins that attack blood cell membranes and cause cell rupture by mechanisms not clearly defined. The protein is Thermostable direct hemolysin 1 (tdh1) of Vibrio parahaemolyticus serotype O3:K6 (strain RIMD 2210633).